The primary structure comprises 802 residues: Pyrophosphate-energized membrane proton pump 3 (802 aa).

6 helical membrane-spanning segments follow: residues Leu-41–Gly-61, Pro-66–Thr-86, Tyr-118–Phe-138, Val-160–Val-180, Ala-206–Tyr-226, and Leu-246–Leu-266. Lys-273 is a binding site for substrate. Residues Asp-276, Asp-280, and Asp-306 each contribute to the Mg(2+) site. 5 helical membrane passes run Phe-348–Leu-368, Met-386–Ala-406, Trp-421–Ile-441, Ile-468–Ile-491, and Gly-511–Leu-531. Residues Asp-541 and Asn-568 each coordinate Mg(2+). The next 4 membrane-spanning stretches (helical) occupy residues Phe-577–Val-597, Val-615–Ala-635, Gly-686–Tyr-706, and Val-716–Asn-736. Asp-743 and Asp-773 together coordinate Mg(2+). Residue Lys-776 coordinates substrate. A helical membrane pass occupies residues Ser-782–Leu-802.

The protein belongs to the H(+)-translocating pyrophosphatase (TC 3.A.10) family. K(+)-insensitive subfamily. Monomer.

It localises to the golgi apparatus membrane. The catalysed reaction is diphosphate + H2O + H(+)(in) = 2 phosphate + 2 H(+)(out). This is Pyrophosphate-energized membrane proton pump 3 (AVPL2) from Arabidopsis thaliana (Mouse-ear cress).